The chain runs to 254 residues: 5-oxoprolinase subunit A (254 aa).

It belongs to the LamB/PxpA family. Forms a complex composed of PxpA, PxpB and PxpC.

It carries out the reaction 5-oxo-L-proline + ATP + 2 H2O = L-glutamate + ADP + phosphate + H(+). Functionally, catalyzes the cleavage of 5-oxoproline to form L-glutamate coupled to the hydrolysis of ATP to ADP and inorganic phosphate. The polypeptide is 5-oxoprolinase subunit A (Acinetobacter baumannii (strain ATCC 17978 / DSM 105126 / CIP 53.77 / LMG 1025 / NCDC KC755 / 5377)).